The primary structure comprises 107 residues: UPF0145 protein CKO_02237 (107 aa).

The protein belongs to the UPF0145 family.

This Citrobacter koseri (strain ATCC BAA-895 / CDC 4225-83 / SGSC4696) protein is UPF0145 protein CKO_02237.